The sequence spans 260 residues: Triosephosphate isomerase (260 aa).

Residue 11–13 coordinates substrate; it reads NWK. H103 functions as the Electrophile in the catalytic mechanism. The active-site Proton acceptor is E175. Residues G181, S220, and 241–242 each bind substrate; that span reads GG.

The protein belongs to the triosephosphate isomerase family. In terms of assembly, homodimer.

The protein resides in the cytoplasm. The enzyme catalyses D-glyceraldehyde 3-phosphate = dihydroxyacetone phosphate. The protein operates within carbohydrate biosynthesis; gluconeogenesis. Its pathway is carbohydrate degradation; glycolysis; D-glyceraldehyde 3-phosphate from glycerone phosphate: step 1/1. Involved in the gluconeogenesis. Catalyzes stereospecifically the conversion of dihydroxyacetone phosphate (DHAP) to D-glyceraldehyde-3-phosphate (G3P). The chain is Triosephosphate isomerase from Shewanella halifaxensis (strain HAW-EB4).